A 291-amino-acid chain; its full sequence is tRNA dimethylallyltransferase (291 aa).

An ATP-binding site is contributed by glycine 8–threonine 15. A substrate-binding site is contributed by threonine 10–threonine 15. The interval aspartate 33–cysteine 36 is interaction with substrate tRNA.

This sequence belongs to the IPP transferase family. Monomer. It depends on Mg(2+) as a cofactor.

The catalysed reaction is adenosine(37) in tRNA + dimethylallyl diphosphate = N(6)-dimethylallyladenosine(37) in tRNA + diphosphate. Functionally, catalyzes the transfer of a dimethylallyl group onto the adenine at position 37 in tRNAs that read codons beginning with uridine, leading to the formation of N6-(dimethylallyl)adenosine (i(6)A). In Aliarcobacter butzleri (strain RM4018) (Arcobacter butzleri), this protein is tRNA dimethylallyltransferase.